A 54-amino-acid chain; its full sequence is Conotoxin mr5.4b (54 aa).

The first 14 residues, 1-14 (ILLLLIASAPSVDA), serve as a signal peptide directing secretion. Residues 15 to 40 (QLKTKDDVPLASFHANVKRTLQKLLN) constitute a propeptide that is removed on maturation. Position 52 is a 4-carboxyglutamate (glutamate 52).

Belongs to the conotoxin T superfamily. Post-translationally, contains 2 disulfide bonds that can be either 'C1-C3, C2-C4' or 'C1-C4, C2-C3', since these disulfide connectivities have been observed for conotoxins with cysteine framework V (for examples, see AC P0DQQ7 and AC P81755). Expressed by the venom duct.

The protein resides in the secreted. This is Conotoxin mr5.4b from Conus marmoreus (Marble cone).